Reading from the N-terminus, the 652-residue chain is Starch synthase 1, chloroplastic/amyloplastic (652 aa).

Residues 1–49 constitute a chloroplast transit peptide; sequence MASLQISGSVKFEPFVGFNRIRHFRPIASLGFPRFRRRFSIGRSLLLRR. An ADP-alpha-D-glucose-binding site is contributed by K156.

This sequence belongs to the glycosyltransferase 1 family. Bacterial/plant glycogen synthase subfamily. In terms of tissue distribution, expressed in roots, leaves, stems, buds and flowers.

It localises to the plastid. The protein localises to the chloroplast. It is found in the amyloplast. It carries out the reaction [(1-&gt;4)-alpha-D-glucosyl](n) + ADP-alpha-D-glucose = [(1-&gt;4)-alpha-D-glucosyl](n+1) + ADP + H(+). It functions in the pathway glycan biosynthesis; starch biosynthesis. Involved in the synthesis of short glycan chains within amylopectin in leaves. Is required to generate chains up to about a degree of polymerization of 10 (DP10). This is Starch synthase 1, chloroplastic/amyloplastic (SS1) from Arabidopsis thaliana (Mouse-ear cress).